The primary structure comprises 154 residues: Transcriptional repressor NrdR (154 aa).

The segment at 3-34 (CPFCGANDTKVIDSRLVAEGEQVRRRRECLAC) is a zinc-finger region. In terms of domain architecture, ATP-cone spans 49–139 (PRLIKQDGSR…VYRRFQDLNE (91 aa)).

Belongs to the NrdR family. The cofactor is Zn(2+).

Negatively regulates transcription of bacterial ribonucleotide reductase nrd genes and operons by binding to NrdR-boxes. This chain is Transcriptional repressor NrdR, found in Pseudomonas syringae pv. syringae (strain B728a).